The following is a 302-amino-acid chain: Deubiquitinase OTUD6B (302 aa).

Residues 1–10 (MEGSEDEEAE) are compositionally biased toward acidic residues. Disordered regions lie at residues 1-52 (MEGS…KQLA) and 99-121 (EQQI…AALE). The span at 106–116 (RISKAQKRREK) shows a compositional bias: basic residues. The OTU domain maps to 156–293 (LEIKQIPSDG…GEHYNSVKLL (138 aa)). Residues 161 to 167 (IPSDGHC) are cys-loop. Asp-164 is an active-site residue. The Nucleophile role is filled by Cys-167. Positions 228-238 (IANTAAWGGQL) are variable-loop. Positions 276–286 (YMRHAYGLGEH) are his-loop. His-286 is an active-site residue.

The catalysed reaction is Thiol-dependent hydrolysis of ester, thioester, amide, peptide and isopeptide bonds formed by the C-terminal Gly of ubiquitin (a 76-residue protein attached to proteins as an intracellular targeting signal).. In terms of biological role, deubiquitinating enzyme that may play a role in the ubiquitin-dependent regulation of different cellular processes. This is Deubiquitinase OTUD6B (OTUD6B) from Gallus gallus (Chicken).